Consider the following 103-residue polypeptide: Co-chaperonin GroES (103 aa).

Belongs to the GroES chaperonin family. As to quaternary structure, heptamer of 7 subunits arranged in a ring. Interacts with the chaperonin GroEL.

The protein localises to the cytoplasm. Functionally, together with the chaperonin GroEL, plays an essential role in assisting protein folding. The GroEL-GroES system forms a nano-cage that allows encapsulation of the non-native substrate proteins and provides a physical environment optimized to promote and accelerate protein folding. GroES binds to the apical surface of the GroEL ring, thereby capping the opening of the GroEL channel. The sequence is that of Co-chaperonin GroES from Picosynechococcus sp. (strain ATCC 27264 / PCC 7002 / PR-6) (Agmenellum quadruplicatum).